The following is a 213-amino-acid chain: Orotate phosphoribosyltransferase (213 aa).

Lys26 contributes to the 5-phospho-alpha-D-ribose 1-diphosphate binding site. 34–35 (FF) is a binding site for orotate. Residues 72 to 73 (YK), Arg99, Lys100, Lys103, His105, and 124 to 132 (DDVITAGTA) contribute to the 5-phospho-alpha-D-ribose 1-diphosphate site. The orotate site is built by Thr128 and Arg156.

It belongs to the purine/pyrimidine phosphoribosyltransferase family. PyrE subfamily. As to quaternary structure, homodimer. Mg(2+) is required as a cofactor.

It catalyses the reaction orotidine 5'-phosphate + diphosphate = orotate + 5-phospho-alpha-D-ribose 1-diphosphate. It functions in the pathway pyrimidine metabolism; UMP biosynthesis via de novo pathway; UMP from orotate: step 1/2. Catalyzes the transfer of a ribosyl phosphate group from 5-phosphoribose 1-diphosphate to orotate, leading to the formation of orotidine monophosphate (OMP). The polypeptide is Orotate phosphoribosyltransferase (Pseudomonas putida (strain GB-1)).